Here is a 1381-residue protein sequence, read N- to C-terminus: DNA-directed RNA polymerase subunit beta' (1381 aa).

The Zn(2+) site is built by cysteine 70, cysteine 72, cysteine 85, and cysteine 88. Mg(2+) contacts are provided by aspartate 461, aspartate 463, and aspartate 465. Residues cysteine 801, cysteine 875, cysteine 882, and cysteine 885 each contribute to the Zn(2+) site. The tract at residues 1362–1381 (VEIEGDENSNKKSLDMHAAN) is disordered. Basic and acidic residues predominate over residues 1369–1381 (NSNKKSLDMHAAN).

Belongs to the RNA polymerase beta' chain family. As to quaternary structure, the RNAP catalytic core consists of 2 alpha, 1 beta, 1 beta' and 1 omega subunit. When a sigma factor is associated with the core the holoenzyme is formed, which can initiate transcription. Requires Mg(2+) as cofactor. It depends on Zn(2+) as a cofactor.

It catalyses the reaction RNA(n) + a ribonucleoside 5'-triphosphate = RNA(n+1) + diphosphate. In terms of biological role, DNA-dependent RNA polymerase catalyzes the transcription of DNA into RNA using the four ribonucleoside triphosphates as substrates. This is DNA-directed RNA polymerase subunit beta' from Syntrophus aciditrophicus (strain SB).